The sequence spans 185 residues: Ribosome-recycling factor (185 aa).

Belongs to the RRF family.

Its subcellular location is the cytoplasm. Functionally, responsible for the release of ribosomes from messenger RNA at the termination of protein biosynthesis. May increase the efficiency of translation by recycling ribosomes from one round of translation to another. This is Ribosome-recycling factor from Idiomarina loihiensis (strain ATCC BAA-735 / DSM 15497 / L2-TR).